A 223-amino-acid chain; its full sequence is Kinetochore protein Spc25 (223 aa).

Residues 51–116 adopt a coiled-coil conformation; that stretch reads RHQRKVGKLQ…QRKNEIMERI (66 aa).

Belongs to the SPC25 family. Component of the Ndc80 complex, which is composed of Ndc80, Nuf2 and Spc25.

It localises to the nucleus. The protein localises to the chromosome. The protein resides in the centromere. Its subcellular location is the kinetochore. Acts as a component of the essential kinetochore-associated Ndc80 complex, which is required for chromosome segregation and spindle checkpoint activity during meiosis and mitosis. Required for kinetochore integrity and the organization of stable microtubule binding sites in the outer plate of the kinetochore. Participates in SAC signaling that responds specifically to disruptions in spindle microtubule dynamics. The NDC80 complex synergistically enhances the affinity of the SKA1 complex for microtubules and may allow the NDC80 complex to track depolymerizing microtubules. This is Kinetochore protein Spc25 from Drosophila yakuba (Fruit fly).